The following is a 379-amino-acid chain: Alkanesulfonate monooxygenase (379 aa).

This sequence belongs to the SsuD family.

The enzyme catalyses an alkanesulfonate + FMNH2 + O2 = an aldehyde + FMN + sulfite + H2O + 2 H(+). Its function is as follows. Catalyzes the desulfonation of aliphatic sulfonates. The protein is Alkanesulfonate monooxygenase of Sorangium cellulosum (strain So ce56) (Polyangium cellulosum (strain So ce56)).